Consider the following 347-residue polypeptide: Molybdenum cofactor biosynthesis bifunctional protein (347 aa).

A molybdenum cofactor biosynthesis protein C region spans residues 1–158; sequence MFTHLDENQQ…EKTGGKADVS (158 aa). Residues 75 to 77 and 116 to 117 contribute to the substrate site; these read FCH and ME. Asp131 (for MoaC activity) is an active-site residue. The interval 159 to 347 is molybdenum cofactor guanylyltransferase; the sequence is QTPLYGLVLT…NSPEDYGQIN (189 aa). GTP-binding positions include 167–169, Lys179, Asp226, and Asp255; that span reads LTG. Mg(2+) is bound at residue Asp255.

In the N-terminal section; belongs to the MoaC family. It in the C-terminal section; belongs to the MobA family. It depends on Mg(2+) as a cofactor.

Its subcellular location is the cytoplasm. The enzyme catalyses Mo-molybdopterin + GTP + H(+) = Mo-molybdopterin guanine dinucleotide + diphosphate. It catalyses the reaction (8S)-3',8-cyclo-7,8-dihydroguanosine 5'-triphosphate = cyclic pyranopterin phosphate + diphosphate. Its pathway is cofactor biosynthesis; molybdopterin biosynthesis. Functionally, catalyzes the conversion of (8S)-3',8-cyclo-7,8-dihydroguanosine 5'-triphosphate to cyclic pyranopterin monophosphate (cPMP). Its function is as follows. Transfers a GMP moiety from GTP to Mo-molybdopterin (Mo-MPT) cofactor (Moco or molybdenum cofactor) to form Mo-molybdopterin guanine dinucleotide (Mo-MGD) cofactor. This chain is Molybdenum cofactor biosynthesis bifunctional protein (moaC/mobA), found in Synechocystis sp. (strain ATCC 27184 / PCC 6803 / Kazusa).